A 291-amino-acid chain; its full sequence is Dihydroorotate dehydrogenase B (NAD(+)), catalytic subunit (291 aa).

FMN-binding positions include Ser17 and 42–43 (KT). Residues Lys42, 67 to 71 (NAIGL), and Asn118 each bind substrate. Asn118 is a binding site for FMN. Ser121 acts as the Nucleophile in catalysis. Residues Lys153 and Ile178 each contribute to the FMN site. Residue 179–180 (NT) participates in substrate binding. Residues Gly204, 230 to 231 (GG), and 252 to 253 (GT) each bind FMN.

Belongs to the dihydroorotate dehydrogenase family. Type 1 subfamily. Heterotetramer of 2 PyrK and 2 PyrD type B subunits. Requires FMN as cofactor.

The protein resides in the cytoplasm. It carries out the reaction (S)-dihydroorotate + NAD(+) = orotate + NADH + H(+). The protein operates within pyrimidine metabolism; UMP biosynthesis via de novo pathway; orotate from (S)-dihydroorotate (NAD(+) route): step 1/1. Functionally, catalyzes the conversion of dihydroorotate to orotate with NAD(+) as electron acceptor. The sequence is that of Dihydroorotate dehydrogenase B (NAD(+)), catalytic subunit (pyrD) from Sulfolobus acidocaldarius (strain ATCC 33909 / DSM 639 / JCM 8929 / NBRC 15157 / NCIMB 11770).